Reading from the N-terminus, the 427-residue chain is MACARPLISVYSEKGESSGKNVTLPAVFKAPIRPDIVNFVHTNLRKNNRQPYAVSELAGHQTSAESWGTGRAVARIPRVRGGGTHRSGQGAFGNMCRGGRMFAPTKTWRRWHRRVNTTQKRYAICSALAASALPALVMSKGHRIEEVPELPLVVEDKVEGYKKTKEAVLLLKKLKAWNDIKKVYASQRMRAGKGKMRNRRRIQRRGPCIIYNEDNGIIKAFRNIPGITLLNVSKLNILKLAPGGHVGRFCIWTESAFRKLDELYGTWRKAASLKSNYNLPMHKMINTDLSRILKSPEIQRALRAPRKKIHRRVLKKNPLKNLRIMLKLNPYAKTMRRNTILRQARNHKLRVDKAAAAAAALQAKSDEKAAVAGKKPVVGKKGKKAAVGVKKQKKPLVGKKAAATKKPAPEKKPAEKKPTTEEKKPAA.

Position 2 is an N-acetylalanine (Ala2). Lys14 carries the post-translational modification N6-acetyllysine. Arg97 carries the post-translational modification Omega-N-methylarginine. Lys106 is modified (N6-acetyllysine). Lys239 participates in a covalent cross-link: Glycyl lysine isopeptide (Lys-Gly) (interchain with G-Cter in SUMO2). Lys259 is modified (N6-acetyllysine). The residue at position 266 (Thr266) is a Phosphothreonine. Phosphoserine is present on residues Ser290 and Ser295. Arg300 is modified (citrulline). Lys327 is covalently cross-linked (Glycyl lysine isopeptide (Lys-Gly) (interchain with G-Cter in SUMO2)). An N6-acetyllysine mark is found at Lys333 and Lys353. An N6-acetyllysine; alternate modification is found at Lys364. Residue Lys364 forms a Glycyl lysine isopeptide (Lys-Gly) (interchain with G-Cter in SUMO1); alternate linkage. Ser365 is modified (phosphoserine). The segment at 369–427 is disordered; sequence AAVAGKKPVVGKKGKKAAVGVKKQKKPLVGKKAAATKKPAPEKKPAEKKPTTEEKKPAA. Positions 377 to 397 are enriched in basic residues; sequence VVGKKGKKAAVGVKKQKKPLV. A compositionally biased stretch (basic and acidic residues) spans 407 to 427; sequence PAPEKKPAEKKPTTEEKKPAA.

The protein belongs to the universal ribosomal protein uL4 family. In terms of assembly, component of the large ribosomal subunit. May bind IPO9 with low affinity. Interacts with RBM3. Citrullinated by PADI4.

It localises to the cytoplasm. Functionally, component of the large ribosomal subunit. The ribosome is a large ribonucleoprotein complex responsible for the synthesis of proteins in the cell. This Homo sapiens (Human) protein is Large ribosomal subunit protein uL4 (RPL4).